Consider the following 706-residue polypeptide: Polyribonucleotide nucleotidyltransferase (706 aa).

Mg(2+) contacts are provided by Asp-486 and Asp-492. Residues 553 to 612 (PRIHTIKISTDKIKDVIGKGGSVIRALTEETGTTIEIEDDGTVKIASTDGEKAKHAIRRI) form the KH domain. In terms of domain architecture, S1 motif spans 622 to 690 (GRVYQGKVTR…RQGRVRLSIK (69 aa)).

The protein belongs to the polyribonucleotide nucleotidyltransferase family. In terms of assembly, component of the RNA degradosome, which is a multiprotein complex involved in RNA processing and mRNA degradation. Mg(2+) is required as a cofactor.

The protein localises to the cytoplasm. It catalyses the reaction RNA(n+1) + phosphate = RNA(n) + a ribonucleoside 5'-diphosphate. Involved in mRNA degradation. Catalyzes the phosphorolysis of single-stranded polyribonucleotides processively in the 3'- to 5'-direction. The sequence is that of Polyribonucleotide nucleotidyltransferase from Pectobacterium carotovorum subsp. carotovorum (strain PC1).